The primary structure comprises 153 residues: Ribonuclease H (153 aa).

An RNase H type-1 domain is found at 1–142; sequence MTDQIEIFTD…ADELARRGVD (142 aa). Aspartate 10, glutamate 48, aspartate 70, and aspartate 134 together coordinate Mg(2+).

Belongs to the RNase H family. In terms of assembly, monomer. The cofactor is Mg(2+).

Its subcellular location is the cytoplasm. The catalysed reaction is Endonucleolytic cleavage to 5'-phosphomonoester.. Functionally, endonuclease that specifically degrades the RNA of RNA-DNA hybrids. This Aromatoleum aromaticum (strain DSM 19018 / LMG 30748 / EbN1) (Azoarcus sp. (strain EbN1)) protein is Ribonuclease H.